We begin with the raw amino-acid sequence, 305 residues long: Ribonuclease HIII (305 aa).

In terms of domain architecture, RNase H type-2 spans 91–305 (WSVIGSDEVG…ANTQKAQKLL (215 aa)). The a divalent metal cation site is built by Asp97, Glu98, and Asp201.

It belongs to the RNase HII family. RnhC subfamily. It depends on Mn(2+) as a cofactor. Mg(2+) is required as a cofactor.

The protein localises to the cytoplasm. The catalysed reaction is Endonucleolytic cleavage to 5'-phosphomonoester.. Endonuclease that specifically degrades the RNA of RNA-DNA hybrids. The protein is Ribonuclease HIII of Enterococcus faecalis (strain ATCC 700802 / V583).